The chain runs to 649 residues: Acetyl-coenzyme A synthetase (649 aa).

CoA is bound by residues 190–193 (RGGR) and Thr310. Residues 386–388 (GEP), 410–415 (DTWWQT), Asp499, and Arg514 contribute to the ATP site. Ser522 contacts CoA. Arg525 contributes to the ATP binding site. 3 residues coordinate Mg(2+): Val536, His538, and Val541. CoA is bound at residue Arg583. N6-acetyllysine is present on Lys608.

Belongs to the ATP-dependent AMP-binding enzyme family. It depends on Mg(2+) as a cofactor. Post-translationally, acetylated. Deacetylation by the SIR2-homolog deacetylase activates the enzyme.

The catalysed reaction is acetate + ATP + CoA = acetyl-CoA + AMP + diphosphate. Its function is as follows. Catalyzes the conversion of acetate into acetyl-CoA (AcCoA), an essential intermediate at the junction of anabolic and catabolic pathways. AcsA undergoes a two-step reaction. In the first half reaction, AcsA combines acetate with ATP to form acetyl-adenylate (AcAMP) intermediate. In the second half reaction, it can then transfer the acetyl group from AcAMP to the sulfhydryl group of CoA, forming the product AcCoA. The protein is Acetyl-coenzyme A synthetase of Methylorubrum populi (strain ATCC BAA-705 / NCIMB 13946 / BJ001) (Methylobacterium populi).